Here is a 250-residue protein sequence, read N- to C-terminus: MKCMIVIPARLASSRLSQKLLLQAGGKSVLQHTYEAALKSSVAEEVIVAVDDPRLAAEVDSFGGQARLTSVDCQSGTDRIAEVALMHEDINILINVQGDEPEIDPKTIDAVAKLLMQHPEADIATAACAIKDRERVEDPNCVKAVLGDDHRAITFSRAAVPHPRDGLTDALLNAEPPNYWQHIGLYAYRREFLLWFATQPPGRLEQIEKLEQLRAIEAGKTIVVAPVEASAPGIDTLEDFRAFTARIESQ.

This sequence belongs to the KdsB family.

The protein localises to the cytoplasm. It catalyses the reaction 3-deoxy-alpha-D-manno-oct-2-ulosonate + CTP = CMP-3-deoxy-beta-D-manno-octulosonate + diphosphate. It functions in the pathway nucleotide-sugar biosynthesis; CMP-3-deoxy-D-manno-octulosonate biosynthesis; CMP-3-deoxy-D-manno-octulosonate from 3-deoxy-D-manno-octulosonate and CTP: step 1/1. It participates in bacterial outer membrane biogenesis; lipopolysaccharide biosynthesis. Functionally, activates KDO (a required 8-carbon sugar) for incorporation into bacterial lipopolysaccharide in Gram-negative bacteria. In Rhodopirellula baltica (strain DSM 10527 / NCIMB 13988 / SH1), this protein is 3-deoxy-manno-octulosonate cytidylyltransferase.